We begin with the raw amino-acid sequence, 880 residues long: DNA mismatch repair protein MutS (880 aa).

Residue 635-642 (GPNMGGKS) participates in ATP binding.

This sequence belongs to the DNA mismatch repair MutS family.

This protein is involved in the repair of mismatches in DNA. It is possible that it carries out the mismatch recognition step. This protein has a weak ATPase activity. This chain is DNA mismatch repair protein MutS, found in Nitrosomonas eutropha (strain DSM 101675 / C91 / Nm57).